The chain runs to 128 residues: ADA histone acetyltransferase complex component 2 (128 aa).

Its subcellular location is the cytoplasm. The protein localises to the nucleus. The chain is ADA histone acetyltransferase complex component 2 (AHC2) from Saccharomyces cerevisiae (strain ATCC 204508 / S288c) (Baker's yeast).